Consider the following 206-residue polypeptide: Large ribosomal subunit protein mL62 (206 aa).

The transit peptide at 1 to 29 directs the protein to the mitochondrion; that stretch reads MAATRCLRWGLSRAGVWLLPPPARCPRRA. Residue Q90 is modified to N5-methylglutamine.

It belongs to the prokaryotic/mitochondrial release factor family. Mitochondrion-specific ribosomal protein mL62 subfamily. As to quaternary structure, component of the mitochondrial large ribosomal subunit (mt-LSU). Mature mammalian 55S mitochondrial ribosomes consist of a small (28S) and a large (39S) subunit. The 28S small subunit contains a 12S ribosomal RNA (12S mt-rRNA) and 30 different proteins. The 39S large subunit contains a 16S rRNA (16S mt-rRNA), a copy of mitochondrial valine transfer RNA (mt-tRNA(Val)), which plays an integral structural role, and 52 different proteins. In terms of processing, methylation of glutamine in the GGQ triplet by HEMK1. In terms of tissue distribution, down-regulated during the in vitro differentiation of HT29-D4 colon carcinoma cells.

Its subcellular location is the mitochondrion. It carries out the reaction an N-acyl-L-alpha-aminoacyl-tRNA + H2O = an N-acyl-L-amino acid + a tRNA + H(+). Functionally, essential peptidyl-tRNA hydrolase component of the mitochondrial large ribosomal subunit. Acts as a codon-independent translation release factor that has lost all stop codon specificity and directs the termination of translation in mitochondrion, possibly in case of abortive elongation. Involved in the hydrolysis of peptidyl-tRNAs that have been prematurely terminated and thus in the recycling of stalled mitochondrial ribosomes. This Homo sapiens (Human) protein is Large ribosomal subunit protein mL62.